A 445-amino-acid polypeptide reads, in one-letter code: UPF0210 protein SPP_0289 (445 aa).

This sequence belongs to the UPF0210 family. As to quaternary structure, homodimer.

The protein is UPF0210 protein SPP_0289 of Streptococcus pneumoniae (strain P1031).